Consider the following 256-residue polypeptide: Isoprenyl transferase 1 (256 aa).

Residue Asp34 is part of the active site. Asp34 contacts Mg(2+). Residues 35–38, Trp39, His52, and 80–82 each bind substrate; these read GNRR and STE. Asn83 acts as the Proton acceptor in catalysis. Residues Arg86, Arg205, and 211–213 each bind substrate; that span reads RLS. Residue Glu224 coordinates Mg(2+).

Belongs to the UPP synthase family. In terms of assembly, homodimer. Mg(2+) serves as cofactor.

Functionally, catalyzes the condensation of isopentenyl diphosphate (IPP) with allylic pyrophosphates generating different type of terpenoids. The sequence is that of Isoprenyl transferase 1 from Corynebacterium efficiens (strain DSM 44549 / YS-314 / AJ 12310 / JCM 11189 / NBRC 100395).